Consider the following 130-residue polypeptide: Small ribosomal subunit protein uS11 (130 aa).

It belongs to the universal ribosomal protein uS11 family. Part of the 30S ribosomal subunit. Interacts with proteins S7 and S18. Binds to IF-3.

In terms of biological role, located on the platform of the 30S subunit, it bridges several disparate RNA helices of the 16S rRNA. Forms part of the Shine-Dalgarno cleft in the 70S ribosome. This Dehalococcoides mccartyi (strain ATCC BAA-2100 / JCM 16839 / KCTC 5957 / BAV1) protein is Small ribosomal subunit protein uS11.